The chain runs to 371 residues: Deoxyhypusine synthase (371 aa).

Residues 112–116 (SNLVT), 138–140 (SAG), Glu144, and Asp245 each bind NAD(+). 143–144 (EE) is a binding site for spermidine. Residue Asp250 coordinates spermidine. NAD(+) is bound at residue Gly291. His296 contacts spermidine. 316 to 317 (TG) is a binding site for NAD(+). Spermidine is bound by residues 322 to 324 (GSD) and 331 to 337 (EAVSWGK). Lys337 (nucleophile) is an active-site residue. NAD(+) is bound at residue 350–351 (EA).

It belongs to the deoxyhypusine synthase family. The cofactor is NAD(+).

It carries out the reaction [eIF5A protein]-L-lysine + spermidine = [eIF5A protein]-deoxyhypusine + propane-1,3-diamine. It functions in the pathway protein modification; eIF5A hypusination. Functionally, catalyzes the NAD-dependent oxidative cleavage of spermidine and the subsequent transfer of the butylamine moiety of spermidine to the epsilon-amino group of a critical lysine residue of the eIF-5A precursor protein to form the intermediate deoxyhypusine residue. This is the first step of the post-translational modification of that lysine into an unusual amino acid residue named hypusine. Hypusination is unique to mature eIF-5A factor and is essential for its function. This Caenorhabditis elegans protein is Deoxyhypusine synthase.